The following is a 539-amino-acid chain: NADH-quinone oxidoreductase subunit N 2 (539 aa).

Helical transmembrane passes span 11 to 31 (LIPE…DVLT), 52 to 72 (LMGL…FSWM), 106 to 126 (PLTH…VILT), 141 to 161 (LILF…LIMI), 193 to 213 (YIFG…LLGL), 248 to 268 (GVAI…VAIV), 296 to 316 (AGFF…SILG), 329 to 349 (WTSL…LAAL), 357 to 377 (MLAY…VGTQ), 385 to 405 (LMYL…LALV), 429 to 449 (LLLT…GFFV), 462 to 484 (AKWL…LRFL), and 500 to 520 (VGFG…GLGI).

It belongs to the complex I subunit 2 family. NDH-1 is composed of 14 different subunits. Subunits NuoA, H, J, K, L, M, N constitute the membrane sector of the complex.

The protein localises to the cell membrane. The enzyme catalyses a quinone + NADH + 5 H(+)(in) = a quinol + NAD(+) + 4 H(+)(out). NDH-1 shuttles electrons from NADH, via FMN and iron-sulfur (Fe-S) centers, to quinones in the respiratory chain. The immediate electron acceptor for the enzyme in this species is believed to be ubiquinone. Couples the redox reaction to proton translocation (for every two electrons transferred, four hydrogen ions are translocated across the cytoplasmic membrane), and thus conserves the redox energy in a proton gradient. This chain is NADH-quinone oxidoreductase subunit N 2, found in Herpetosiphon aurantiacus (strain ATCC 23779 / DSM 785 / 114-95).